Consider the following 944-residue polypeptide: Bifunctional glutamine synthetase adenylyltransferase/adenylyl-removing enzyme (944 aa).

The interval 1–440 (MSANSVFQQL…IFTQLIGEDD (440 aa)) is adenylyl removase. The tract at residues 448 to 944 (VSEFKRLWLL…LSSKQKWLDE (497 aa)) is adenylyl transferase.

The protein belongs to the GlnE family. The cofactor is Mg(2+).

The catalysed reaction is [glutamine synthetase]-O(4)-(5'-adenylyl)-L-tyrosine + phosphate = [glutamine synthetase]-L-tyrosine + ADP. The enzyme catalyses [glutamine synthetase]-L-tyrosine + ATP = [glutamine synthetase]-O(4)-(5'-adenylyl)-L-tyrosine + diphosphate. Functionally, involved in the regulation of glutamine synthetase GlnA, a key enzyme in the process to assimilate ammonia. When cellular nitrogen levels are high, the C-terminal adenylyl transferase (AT) inactivates GlnA by covalent transfer of an adenylyl group from ATP to specific tyrosine residue of GlnA, thus reducing its activity. Conversely, when nitrogen levels are low, the N-terminal adenylyl removase (AR) activates GlnA by removing the adenylyl group by phosphorolysis, increasing its activity. The regulatory region of GlnE binds the signal transduction protein PII (GlnB) which indicates the nitrogen status of the cell. The protein is Bifunctional glutamine synthetase adenylyltransferase/adenylyl-removing enzyme of Proteus mirabilis (strain HI4320).